Reading from the N-terminus, the 268-residue chain is Protein MSS18 (268 aa).

This sequence to baculovirus occlusion-derived virus envelope protein E27 (ODV-E27).

The protein localises to the mitochondrion. Its function is as follows. Involved in splicing of intron aI5-beta of the mitochondrial COX1 transcript. The protein is Protein MSS18 (MSS18) of Saccharomyces cerevisiae (strain ATCC 204508 / S288c) (Baker's yeast).